The following is a 363-amino-acid chain: Probable aminomethyltransferase (363 aa).

This sequence belongs to the GcvT family. The glycine cleavage system is composed of four proteins: P, T, L and H.

The catalysed reaction is N(6)-[(R)-S(8)-aminomethyldihydrolipoyl]-L-lysyl-[protein] + (6S)-5,6,7,8-tetrahydrofolate = N(6)-[(R)-dihydrolipoyl]-L-lysyl-[protein] + (6R)-5,10-methylene-5,6,7,8-tetrahydrofolate + NH4(+). Functionally, the glycine cleavage system catalyzes the degradation of glycine. In Haloarcula marismortui (strain ATCC 43049 / DSM 3752 / JCM 8966 / VKM B-1809) (Halobacterium marismortui), this protein is Probable aminomethyltransferase.